The following is a 1025-amino-acid chain: Multidrug resistance protein MdtC (1025 aa).

Over 1–6 the chain is Cytoplasmic; sequence MKFFAL. The helical transmembrane segment at 7–29 threads the bilayer; that stretch reads FIYRPVATILLSVAITLCGILGF. Over 30-335 the chain is Periplasmic; the sequence is RMLPVAPLPQ…TIRASLEEVE (306 aa). The chain crosses the membrane as a helical span at residues 336-353; it reads QTLIISVALVILVVFLFL. Residues 354-359 are Cytoplasmic-facing; the sequence is RSGRAT. Residues 360–379 form a helical membrane-spanning segment; that stretch reads IIPAVAVPVSLIGTFAAMYL. At 380 to 388 the chain is on the periplasmic side; it reads CGFSLNNLS. Residues 389–411 traverse the membrane as a helical segment; the sequence is LMALTIATGFVVDDAIVVLENIA. Residues 412-430 lie on the Cytoplasmic side of the membrane; sequence RHLEAGMKPLQAALQGTRE. A helical transmembrane segment spans residues 431–453; that stretch reads VGFTVLSMSLSLVAVFLPLLLMG. Over 454–467 the chain is Periplasmic; the sequence is GLPGRLLREFAVTL. A helical membrane pass occupies residues 468–490; the sequence is SVAIGISLLVSLTLTPMMCGWML. Topologically, residues 491–852 are cytoplasmic; the sequence is KASKPREQKR…QVFQETMNSQ (362 aa). The helical transmembrane segment at 853-875 threads the bilayer; the sequence is VILIIAAIATVYIVLGILYESYV. Residues 876-894 lie on the Periplasmic side of the membrane; the sequence is HPLTILSTLPSAGVGALLA. Residues 895-917 form a helical membrane-spanning segment; sequence LELFNAPFSLIALIGIMLLIGIV. Residues 918-947 are Cytoplasmic-facing; the sequence is KKNAIMMVDFALEAQRHGNLTPQEAIFQAC. Residues 948–970 form a helical membrane-spanning segment; sequence LLRFRPIMMTTLAALFGALPLVL. Topologically, residues 971–984 are periplasmic; sequence SGGDGSELRQPLGI. Residues 985–1007 traverse the membrane as a helical segment; that stretch reads TIVGGLVMSQLLTLYTTPVVYLF. Over 1008 to 1025 the chain is Cytoplasmic; that stretch reads FDRLRLRFSRKPKQAVTE.

The protein belongs to the resistance-nodulation-cell division (RND) (TC 2.A.6) family. MdtC subfamily. Part of a tripartite efflux system composed of MdtA, MdtB and MdtC. MdtC forms a heteromultimer with MdtB.

It localises to the cell inner membrane. In terms of biological role, the MdtABC tripartite complex confers resistance against novobiocin and deoxycholate. The chain is Multidrug resistance protein MdtC from Escherichia coli O6:H1 (strain CFT073 / ATCC 700928 / UPEC).